Reading from the N-terminus, the 1028-residue chain is Exportin-T (1028 aa).

This sequence belongs to the exportin family.

Its subcellular location is the nucleus. It localises to the cytoplasm. In terms of biological role, tRNA nucleus export receptor which facilitates tRNA translocation across the nuclear pore complex. Involved in pre-tRNA splicing, probably by affecting the interaction of pre-tRNA with splicing endonuclease. The chain is Exportin-T (los1) from Aspergillus terreus (strain NIH 2624 / FGSC A1156).